We begin with the raw amino-acid sequence, 258 residues long: MVLIRVLANLLVLQLSYAQKSSELVIGGDECNINEHRSLVYLYNDSNFQCGGTLINQEWVLSAAHCDMENMEIYLGVHNLSLPNKDQKRRDPKEKFFCLSSKNYTKWDKDIMLIKLNRPVKTSTHIAPLSLPSSPPSVGSVCRIMGWGTVTSPNETLLDVPHCANINILNYTVCRAASPRLPTQSRTLCAGILQGGIDACKGDSGGPLICNGQIQGIVSWGNHPCAQPLKPGHYTHVFDYTDWIQSIIAGNTTATCPP.

Positions 1 to 18 are cleaved as a signal peptide; that stretch reads MVLIRVLANLLVLQLSYA. Positions 19–24 are excised as a propeptide; the sequence is QKSSEL. The Peptidase S1 domain occupies 25–249; sequence VIGGDECNIN…YTDWIQSIIA (225 aa). Disulfide bonds link Cys-31/Cys-163, Cys-50/Cys-66, Cys-98/Cys-256, Cys-142/Cys-210, Cys-174/Cys-189, and Cys-200/Cys-225. N-linked (GlcNAc...) asparagine glycosylation is present at Asn-44. The active-site Charge relay system is the His-65. N-linked (GlcNAc...) asparagine glycans are attached at residues Asn-79 and Asn-103. Residue Asp-110 is the Charge relay system of the active site. 2 N-linked (GlcNAc...) asparagine glycosylation sites follow: Asn-154 and Asn-170. Ser-204 (charge relay system) is an active-site residue. N-linked (GlcNAc...) asparagine glycosylation occurs at Asn-251.

Belongs to the peptidase S1 family. Snake venom subfamily. Monomer. As to expression, expressed by the venom gland.

It is found in the secreted. Its function is as follows. Snake venom serine protease that may act in the hemostasis system of the prey. This chain is Serine protease VLSP-3, found in Macrovipera lebetinus (Levantine viper).